Reading from the N-terminus, the 248-residue chain is Adenosylcobinamide-GDP ribazoletransferase (248 aa).

The next 6 helical transmembrane spans lie at 36-56, 59-79, 114-134, 137-157, 170-190, and 199-219; these read FFLP…YLGL, FLPA…ITGG, GTIA…SLVL, YSIA…FLCL, IFIG…VLVL, and ATII…LLCL.

It belongs to the CobS family. Requires Mg(2+) as cofactor.

It localises to the cell membrane. It carries out the reaction alpha-ribazole + adenosylcob(III)inamide-GDP = adenosylcob(III)alamin + GMP + H(+). The enzyme catalyses alpha-ribazole 5'-phosphate + adenosylcob(III)inamide-GDP = adenosylcob(III)alamin 5'-phosphate + GMP + H(+). It functions in the pathway cofactor biosynthesis; adenosylcobalamin biosynthesis; adenosylcobalamin from cob(II)yrinate a,c-diamide: step 7/7. In terms of biological role, joins adenosylcobinamide-GDP and alpha-ribazole to generate adenosylcobalamin (Ado-cobalamin). Also synthesizes adenosylcobalamin 5'-phosphate from adenosylcobinamide-GDP and alpha-ribazole 5'-phosphate. In Clostridium botulinum (strain Langeland / NCTC 10281 / Type F), this protein is Adenosylcobinamide-GDP ribazoletransferase.